The following is a 753-amino-acid chain: 5-methyltetrahydropteroyltriglutamate--homocysteine methyltransferase (753 aa).

5-methyltetrahydropteroyltri-L-glutamate contacts are provided by residues 17-20 (RELK) and lysine 117. Residues 431 to 433 (IGS) and glutamate 484 contribute to the L-homocysteine site. Residues 431–433 (IGS) and glutamate 484 each bind L-methionine. Residues 515–516 (RC) and tryptophan 561 each bind 5-methyltetrahydropteroyltri-L-glutamate. Aspartate 599 is an L-homocysteine binding site. Aspartate 599 provides a ligand contact to L-methionine. Glutamate 605 contributes to the 5-methyltetrahydropteroyltri-L-glutamate binding site. 3 residues coordinate Zn(2+): histidine 641, cysteine 643, and glutamate 665. Histidine 694 acts as the Proton donor in catalysis. Residue cysteine 726 coordinates Zn(2+).

Belongs to the vitamin-B12 independent methionine synthase family. It depends on Zn(2+) as a cofactor.

The catalysed reaction is 5-methyltetrahydropteroyltri-L-glutamate + L-homocysteine = tetrahydropteroyltri-L-glutamate + L-methionine. The protein operates within amino-acid biosynthesis; L-methionine biosynthesis via de novo pathway; L-methionine from L-homocysteine (MetE route): step 1/1. Functionally, catalyzes the transfer of a methyl group from 5-methyltetrahydrofolate to homocysteine resulting in methionine formation. The sequence is that of 5-methyltetrahydropteroyltriglutamate--homocysteine methyltransferase from Shigella boydii serotype 18 (strain CDC 3083-94 / BS512).